The primary structure comprises 205 residues: uncharacterized protein (205 aa).

The next 5 helical transmembrane spans lie at leucine 4–aspartate 24, lysine 105–leucine 125, phenylalanine 130–asparagine 150, tryptophan 151–cysteine 171, and isoleucine 182–isoleucine 202.

The protein resides in the cell membrane. This is an uncharacterized protein from Methanocaldococcus jannaschii (strain ATCC 43067 / DSM 2661 / JAL-1 / JCM 10045 / NBRC 100440) (Methanococcus jannaschii).